The sequence spans 113 residues: Large ribosomal subunit protein P2 (113 aa).

The disordered stretch occupies residues 62 to 113 (LASVPSGGAGGAAASGGAAAAGGSAQAEAAPEAAKEEEKEESDEDMGFGLFD). Over residues 76–93 (SGGAAAAGGSAQAEAAPE) the composition is skewed to low complexity. S103 carries the phosphoserine modification.

This sequence belongs to the eukaryotic ribosomal protein P1/P2 family. P1 and P2 exist as dimers at the large ribosomal subunit.

Its function is as follows. Plays an important role in the elongation step of protein synthesis. This chain is Large ribosomal subunit protein P2 (ALTA5), found in Alternaria alternata (Alternaria rot fungus).